Consider the following 688-residue polypeptide: Translation initiation factor IF-2 (688 aa).

Residues 53 to 101 (GAEKPSVADEFEVEEKVVRSKKNSNKNKKKGKANEDKRQDNFAGRQQTP) are disordered. Residues 71-83 (RSKKNSNKNKKKG) are compositionally biased toward basic residues. The tr-type G domain maps to 190–359 (ERPAVVTIMG…LLVSEVEEYK (170 aa)). Positions 199–206 (GHVDHGKT) are G1. Residue 199 to 206 (GHVDHGKT) coordinates GTP. The interval 224-228 (GITQH) is G2. The segment at 245–248 (DTPG) is G3. GTP contacts are provided by residues 245–249 (DTPGH) and 299–302 (NKMD). The G4 stretch occupies residues 299-302 (NKMD). Positions 335-337 (SAI) are G5.

The protein belongs to the TRAFAC class translation factor GTPase superfamily. Classic translation factor GTPase family. IF-2 subfamily.

It localises to the cytoplasm. Functionally, one of the essential components for the initiation of protein synthesis. Protects formylmethionyl-tRNA from spontaneous hydrolysis and promotes its binding to the 30S ribosomal subunits. Also involved in the hydrolysis of GTP during the formation of the 70S ribosomal complex. The polypeptide is Translation initiation factor IF-2 (Bacillus mycoides (strain KBAB4) (Bacillus weihenstephanensis)).